A 780-amino-acid polypeptide reads, in one-letter code: Protein phosphatase 1 regulatory subunit 21 (780 aa).

Coiled-coil stretches lie at residues 1 to 207 (MASA…LKTL) and 556 to 607 (ESRE…LKNT). The interval 84–104 (EPRGKKNKKSGESSSQLSQEQ) is disordered. Over residues 95–104 (ESSSQLSQEQ) the composition is skewed to low complexity. Thr-652 is modified (phosphothreonine). A coiled-coil region spans residues 693 to 742 (YAECRALSKRLALAEKSKEALTEEMKLASQNISRLQDELTTTKRSYEDQL). Residues 760–780 (REEIDTLKMSSKGNSKKNKSR) are disordered.

Component of the FERRY complex, composed of five subunits: TBCK, PPP1R21, FERRY3, CRYZL1 and GATAD1, with a ratio of 1:2:1:2:4 respectively. PPP1R21 serves as a binding hub connecting all five complex subunits to mediate the binding to specific mitochondrial mRNAs. Interacts with the GTP-bound form of RAB5A (via its C-terminal region); linking the mRNP complex onto trafficking endosomes for active mRNA transport. Interacts with PPP1CA.

Its subcellular location is the early endosome. In terms of biological role, component of the FERRY complex (Five-subunit Endosomal Rab5 and RNA/ribosome intermediary). The FERRY complex directly interacts with mRNAs and RAB5A, and functions as a RAB5A effector involved in the localization and the distribution of specific mRNAs most likely by mediating their endosomal transport. The complex recruits mRNAs and ribosomes to early endosomes through direct mRNA-interaction. In the complex, PPP1R21 serves as a binding hub connecting all five complex subunits and mediating the binding to mRNA and early endosomes via RAB5A. Putative regulator of protein phosphatase 1 (PP1) activity. May play a role in the endosomal sorting process or in endosome maturation pathway. The sequence is that of Protein phosphatase 1 regulatory subunit 21 (PPP1R21) from Homo sapiens (Human).